The chain runs to 155 residues: Transcriptional repressor NrdR (155 aa).

Residues 3 to 34 (CPYCQNADTRVVDSRLIGEGEQVRRRRQCPSC) fold into a zinc finger. The region spanning 49–139 (PRVVKSDGRR…VYRRFEDVGA (91 aa)) is the ATP-cone domain.

Belongs to the NrdR family. Zn(2+) is required as a cofactor.

Negatively regulates transcription of bacterial ribonucleotide reductase nrd genes and operons by binding to NrdR-boxes. The protein is Transcriptional repressor NrdR of Halorhodospira halophila (strain DSM 244 / SL1) (Ectothiorhodospira halophila (strain DSM 244 / SL1)).